The following is a 464-amino-acid chain: Soluble pyridine nucleotide transhydrogenase (464 aa).

An FAD-binding site is contributed by Asp35–Cys44.

This sequence belongs to the class-I pyridine nucleotide-disulfide oxidoreductase family. The cofactor is FAD.

The protein localises to the cytoplasm. It carries out the reaction NAD(+) + NADPH = NADH + NADP(+). In terms of biological role, conversion of NADPH, generated by peripheral catabolic pathways, to NADH, which can enter the respiratory chain for energy generation. This chain is Soluble pyridine nucleotide transhydrogenase, found in Pseudomonas entomophila (strain L48).